The primary structure comprises 344 residues: GDSL esterase/lipase At1g73610 (344 aa).

The first 24 residues, 1 to 24 (MNCLMFFKMLLAFSFISLFYVGNA), serve as a signal peptide directing secretion. N-linked (GlcNAc...) asparagine glycosylation occurs at Asn30. Ser42 functions as the Nucleophile in the catalytic mechanism. Catalysis depends on residues Asp319 and His322.

Belongs to the 'GDSL' lipolytic enzyme family.

The protein resides in the secreted. This chain is GDSL esterase/lipase At1g73610, found in Arabidopsis thaliana (Mouse-ear cress).